A 428-amino-acid polypeptide reads, in one-letter code: Histidinol dehydrogenase (428 aa).

NAD(+) contacts are provided by Y125, Q186, and N209. 3 residues coordinate substrate: S232, Q254, and H257. The Zn(2+) site is built by Q254 and H257. Residues E322 and H323 each act as proton acceptor in the active site. Substrate-binding residues include H323, D356, E410, and H415. D356 is a Zn(2+) binding site. H415 is a binding site for Zn(2+).

This sequence belongs to the histidinol dehydrogenase family. It depends on Zn(2+) as a cofactor.

It catalyses the reaction L-histidinol + 2 NAD(+) + H2O = L-histidine + 2 NADH + 3 H(+). It participates in amino-acid biosynthesis; L-histidine biosynthesis; L-histidine from 5-phospho-alpha-D-ribose 1-diphosphate: step 9/9. Functionally, catalyzes the sequential NAD-dependent oxidations of L-histidinol to L-histidinaldehyde and then to L-histidine. The sequence is that of Histidinol dehydrogenase from Lactiplantibacillus plantarum (strain ATCC BAA-793 / NCIMB 8826 / WCFS1) (Lactobacillus plantarum).